The following is a 198-amino-acid chain: NAD(P)H dehydrogenase (quinone) (198 aa).

The region spanning 4–189 is the Flavodoxin-like domain; sequence ILVLYYSMYG…SIARYQGEYV (186 aa). FMN-binding positions include 10–15 and 78–80; these read SMYGHI and TRF. Residue Y12 participates in NAD(+) binding. W98 contacts substrate. FMN-binding positions include 113 to 118 and H133; that span reads STGTGG.

Belongs to the WrbA family. The cofactor is FMN.

It catalyses the reaction a quinone + NADH + H(+) = a quinol + NAD(+). The enzyme catalyses a quinone + NADPH + H(+) = a quinol + NADP(+). In Salmonella agona (strain SL483), this protein is NAD(P)H dehydrogenase (quinone).